Reading from the N-terminus, the 1038-residue chain is Rap guanine nucleotide exchange factor 1 (1038 aa).

10 to 140 serves as a coordination point for a nucleoside 3',5'-cyclic phosphate; that stretch reads RLSPLHTFSD…DILTDETPSD (131 aa). In terms of domain architecture, DEP spans 234-316; that stretch reads TDNHQVIRDI…KTNSYYRWVQ (83 aa). 375–492 contacts a nucleoside 3',5'-cyclic phosphate; it reads ALSHLSTMVK…VRLKDYGEDV (118 aa). Residues 516-654 form the N-terminal Ras-GEF domain; it reads CGYSVMAGKA…DILTRIGSIR (139 aa). The region spanning 795–1028 is the Ras-GEF domain; sequence DSQELAHQLF…MQLSYEIEPK (234 aa).

In terms of assembly, interacts (via C-terminus) with drn-1. Expressed specifically in neurons including the nerve ring, ventral and dorsal nerve cord motor neurons and tail ganglia.

Guanine nucleotide-releasing protein. Together with GTPase drn-1, may regulate acetylcholine release at the neuromuscular junctions probably downstream of G-protein gsa-1 and adenylate cyclase acy-1. The chain is Rap guanine nucleotide exchange factor 1 (epac-1) from Caenorhabditis elegans.